We begin with the raw amino-acid sequence, 655 residues long: Archaeal Lon protease (655 aa).

Topologically, residues 1-123 (MEENIESVEE…KAEREKRDRS (123 aa)) are cytoplasmic. Residue 57 to 64 (GEPGTGKS) participates in ATP binding. A helical membrane pass occupies residues 124–144 (RSIMFVIFSVVLLGIIAAIVL). Arginine 145 is a topological domain (extracellular). A helical transmembrane segment spans residues 146–166 (SITLIFFAIMAAAFLYMAMAF). Topologically, residues 167-655 (NPVIRNEKAM…ASTRAGQNVA (489 aa)) are cytoplasmic. The region spanning 433–618 (GSVVGMVNGL…EDVLKVALVN (186 aa)) is the Lon proteolytic domain. Active-site residues include serine 525 and lysine 568.

It belongs to the peptidase S16 family. Archaeal LonB subfamily. In terms of assembly, homohexamer. Organized in a ring with a central cavity.

It localises to the cell membrane. In terms of biological role, ATP-dependent serine protease that mediates the selective degradation of mutant and abnormal proteins as well as certain short-lived regulatory proteins. Degrades polypeptides processively. The polypeptide is Archaeal Lon protease (Thermoplasma volcanium (strain ATCC 51530 / DSM 4299 / JCM 9571 / NBRC 15438 / GSS1)).